The chain runs to 444 residues: Cobyrinate a,c-diamide synthase (444 aa).

The GATase cobBQ-type domain occupies Ile-250 to Lys-438. The active-site Nucleophile is the Cys-332.

It belongs to the CobB/CbiA family. It depends on Mg(2+) as a cofactor.

The catalysed reaction is cob(II)yrinate + 2 L-glutamine + 2 ATP + 2 H2O = cob(II)yrinate a,c diamide + 2 L-glutamate + 2 ADP + 2 phosphate + 2 H(+). It functions in the pathway cofactor biosynthesis; adenosylcobalamin biosynthesis; cob(II)yrinate a,c-diamide from sirohydrochlorin (anaerobic route): step 10/10. Its function is as follows. Catalyzes the ATP-dependent amidation of the two carboxylate groups at positions a and c of cobyrinate, using either L-glutamine or ammonia as the nitrogen source. The sequence is that of Cobyrinate a,c-diamide synthase from Fusobacterium nucleatum subsp. nucleatum (strain ATCC 25586 / DSM 15643 / BCRC 10681 / CIP 101130 / JCM 8532 / KCTC 2640 / LMG 13131 / VPI 4355).